A 355-amino-acid polypeptide reads, in one-letter code: MSGISAQLVKKLRDLTDAGMMDCKKALVEVAGDLQKAIDFLREKGLSKAAKKADRIAAEGVIALEVVPDFKSAMMVEINSETDFVAKNEGFKELVKKTLETIKAHNIHTTEELLKSPLDNKPFEEYLHSQIAVIGENILVRKIAHLKAPSFHIINGYAHSNARVGVLITIKYDNEKNAPKVVELARNIAMHAAAMKPQVLDSKDFSLDFVKKETLALIAEIEKDNEEAKRLGKPLKNIPTFGSRIELSDEVLAHQKKAFEDELKAQGKPEKIWDKIVPGKMERFIADNTLIDQRLTLLGQFYVMDDKKTIAQVVADCSKEWDDHLTITEYVRFELGEGIEKKAENFAEEVALQMK.

The segment at T82–V85 is involved in Mg(2+) ion dislocation from EF-Tu.

This sequence belongs to the EF-Ts family.

It is found in the cytoplasm. Associates with the EF-Tu.GDP complex and induces the exchange of GDP to GTP. It remains bound to the aminoacyl-tRNA.EF-Tu.GTP complex up to the GTP hydrolysis stage on the ribosome. This Helicobacter pylori (strain Shi470) protein is Elongation factor Ts.